The primary structure comprises 353 residues: Ferredoxin--NADP reductase (353 aa).

Residues D33, Q41, Y46, V86, F121, D293, and T333 each coordinate FAD.

This sequence belongs to the ferredoxin--NADP reductase type 2 family. In terms of assembly, homodimer. FAD is required as a cofactor.

The enzyme catalyses 2 reduced [2Fe-2S]-[ferredoxin] + NADP(+) + H(+) = 2 oxidized [2Fe-2S]-[ferredoxin] + NADPH. This Verminephrobacter eiseniae (strain EF01-2) protein is Ferredoxin--NADP reductase.